A 278-amino-acid chain; its full sequence is Dehydrogenase/reductase SDR family member 4 (278 aa).

36–60 (LVTASTDGIGFAIARRLAQDGAHVV) is a binding site for NADP(+). Residue Lys92 is modified to N6-acetyllysine; alternate. Lys92 bears the N6-succinyllysine; alternate mark. At Lys105 the chain carries N6-acetyllysine. A Phosphoserine modification is found at Ile140. Ser169 is a substrate binding site. Residue Tyr182 is the Proton acceptor of the active site. Lys186 contacts NADP(+). Lys216 bears the N6-acetyllysine; alternate mark. An N6-succinyllysine; alternate modification is found at Lys216. At Ser220 the chain carries Phosphoserine. An N6-succinyllysine mark is found at Lys227 and Lys234. Positions 276–278 (SRL) match the Peroxisomal targeting signal motif.

This sequence belongs to the short-chain dehydrogenases/reductases (SDR) family. Homotetramer. Predominantly expressed in normal cervix (at protein level). In terms of tissue distribution, expressed in some neoplastic cervical tissues, but not in normal cervix (at protein level). As to expression, expressed in a few neoplastic cervical tissues. High expression in liver.

Its subcellular location is the peroxisome. It localises to the nucleus. It catalyses the reaction a secondary alcohol + NADP(+) = a ketone + NADPH + H(+). It carries out the reaction 3beta-hydroxy-5beta-pregnane-20-one + NADP(+) = 5beta-pregnan-3,20-dione + NADPH + H(+). The enzyme catalyses 5beta-dihydrotestosterone + NADPH + H(+) = 5beta-androstane-3beta,17beta-diol + NADP(+). The catalysed reaction is 5beta-androstane-3,17-dione + NADPH + H(+) = 3beta-hydroxy-5beta-androstane-17-one + NADP(+). It catalyses the reaction isatin + NADPH + H(+) = 3-hydroxyindolin-2-one + NADP(+). It carries out the reaction lithocholate + NADP(+) = 3-oxo-5beta-cholan-24-oate + NADPH + H(+). The enzyme catalyses 3-oxo-5beta-cholan-24-oate + NADPH + H(+) = isolithocholate + NADP(+). With respect to regulation, inhibited by flavonoids (quercetin and genistein), cetylpyridium chloride, phenylhexane and valproic acid. Low inhibition is observed with fatty acids (myristic acid and lauric acid). No significant inhibition is observed with barbital, dicumarol, indomethacin, metyrapone, ethacrynic acid, disulfiram, hexestrol and benzodiazepines (diazepam and nitrazepam). Its function is as follows. NADPH-dependent oxidoreductase which catalyzes the reduction of a variety of compounds bearing carbonyl groups including ketosteroids, alpha-dicarbonyl compounds, aldehydes, aromatic ketones and quinones. Reduces 3-ketosteroids and benzil into 3beta-hydroxysteroids and R-benzoin, respectively, in contrast to the stereoselectivity of non-primate DHRS4s which produce 3alpha-hydroxysteroids and S-benzoin. Diplays low activity toward all-trans-retinal and no activity toward 9-cis-retinal as compared to non-primate mammals. In the reverse reaction, catalyze the NAD-dependent oxidation of 3beta-hydroxysteroids and alcohol, but with much lower efficiency. Involved in the metabolism of 3beta-hydroxysteroids, isatin and xenobiotic carbonyl compounds. In terms of biological role, no detected catalytic activity in vitro, possibly due to the lack of catalytic site. NADPH-dependent oxidoreductase which catalyzes the reduction of a variety of compounds bearing carbonyl groups including ketosteroids, alpha-dicarbonyl compounds, aldehydes, aromatic ketones and quinones. Involved in the metabolism of 3beta-hydroxysteroids, isatin and xenobiotic carbonyl compounds. Has a higher catalytic activity for xenobiotic alpha-dicarbonyl compounds, sucha as benzil, than isoform 1 and is involved in benzil detoxification. This is Dehydrogenase/reductase SDR family member 4 from Homo sapiens (Human).